We begin with the raw amino-acid sequence, 255 residues long: Myogenic factor 5 (255 aa).

Positions Asp83–Leu134 constitute a bHLH domain. The span at Ser221 to Ser242 shows a compositional bias: low complexity. The disordered stretch occupies residues Ser221–His246.

Efficient DNA binding requires dimerization with another bHLH protein.

Its subcellular location is the nucleus. Its function is as follows. Acts as a transcriptional activator that promotes transcription of muscle-specific target genes and plays a role in muscle differentiation. Induces fibroblasts to differentiate into myoblasts. Probable sequence specific DNA-binding protein. This is Myogenic factor 5 (myf5) from Xenopus laevis (African clawed frog).